A 125-amino-acid polypeptide reads, in one-letter code: Small ribosomal subunit protein uS12 (125 aa).

D89 is modified (3-methylthioaspartic acid).

This sequence belongs to the universal ribosomal protein uS12 family. Part of the 30S ribosomal subunit. Contacts proteins S8 and S17. May interact with IF1 in the 30S initiation complex.

Functionally, with S4 and S5 plays an important role in translational accuracy. In terms of biological role, interacts with and stabilizes bases of the 16S rRNA that are involved in tRNA selection in the A site and with the mRNA backbone. Located at the interface of the 30S and 50S subunits, it traverses the body of the 30S subunit contacting proteins on the other side and probably holding the rRNA structure together. The combined cluster of proteins S8, S12 and S17 appears to hold together the shoulder and platform of the 30S subunit. The chain is Small ribosomal subunit protein uS12 from Acidovorax sp. (strain JS42).